A 509-amino-acid chain; its full sequence is Bifunctional purine biosynthesis protein PurH (509 aa).

The MGS-like domain maps to 1 to 144 (MKRALLSVSD…KNARDVIVVV (144 aa)).

Belongs to the PurH family.

The catalysed reaction is (6R)-10-formyltetrahydrofolate + 5-amino-1-(5-phospho-beta-D-ribosyl)imidazole-4-carboxamide = 5-formamido-1-(5-phospho-D-ribosyl)imidazole-4-carboxamide + (6S)-5,6,7,8-tetrahydrofolate. It carries out the reaction IMP + H2O = 5-formamido-1-(5-phospho-D-ribosyl)imidazole-4-carboxamide. The protein operates within purine metabolism; IMP biosynthesis via de novo pathway; 5-formamido-1-(5-phospho-D-ribosyl)imidazole-4-carboxamide from 5-amino-1-(5-phospho-D-ribosyl)imidazole-4-carboxamide (10-formyl THF route): step 1/1. It functions in the pathway purine metabolism; IMP biosynthesis via de novo pathway; IMP from 5-formamido-1-(5-phospho-D-ribosyl)imidazole-4-carboxamide: step 1/1. The polypeptide is Bifunctional purine biosynthesis protein PurH (Oenococcus oeni (strain ATCC BAA-331 / PSU-1)).